Reading from the N-terminus, the 342-residue chain is Cellular tumor antigen p53 (342 aa).

A transcription activation (acidic) region spans residues 1–35; the sequence is MEEADLTLPLSQDTFHDLWNNVFLSTENESLAPPE. Residues 68–255 mediate DNA binding; it reads NYAGEHGFNL…KTEEGNLEKS (188 aa). Positions 142, 145, 201, and 205 each coordinate Zn(2+). The tract at residues 236-243 is interaction with DNA; sequence RVCACPGR. Basic and acidic residues predominate over residues 244 to 256; sequence DRKTEEGNLEKSG. The disordered stretch occupies residues 244-287; sequence DRKTEEGNLEKSGTKQTKKRKSAPAPDTSTAKKSKSASSGEDED. Positions 261–278 match the Bipartite nuclear localization signal motif; the sequence is KKRKSAPAPDTSTAKKSK. Positions 271–282 are enriched in low complexity; that stretch reads TSTAKKSKSASS. The tract at residues 288 to 317 is oligomerization; sequence KEIYTLSIRGRNRYLWFKSLNDGLELMDKT. A Nuclear export signal motif is present at residues 302 to 313; it reads LWFKSLNDGLEL. Residues 318-342 are disordered; sequence GPKIKQEIPAPSSGKRLLKGGSDSD. Positions 319 to 336 are basic (repression of DNA-binding); it reads PKIKQEIPAPSSGKRLLK.

Belongs to the p53 family. Binds DNA as a homotetramer. The cofactor is Zn(2+).

The protein localises to the cytoplasm. The protein resides in the nucleus. Functionally, multifunctional transcription factor that induces cell cycle arrest, DNA repair or apoptosis upon binding to its target DNA sequence. Acts as a tumor suppressor in many tumor types; induces growth arrest or apoptosis depending on the physiological circumstances and cell type. Negatively regulates cell division by controlling expression of a set of genes required for this process. One of the activated genes is an inhibitor of cyclin-dependent kinases. Apoptosis induction seems to be mediated either by stimulation of BAX and FAS antigen expression, or by repression of Bcl-2 expression. The polypeptide is Cellular tumor antigen p53 (tp53) (Xiphophorus hellerii (Green swordtail)).